The chain runs to 423 residues: Structure-specific endonuclease subunit SLX1 (423 aa).

Residues 23–105 (AFYCCYLLRS…QNTKVSRHAD (83 aa)) form the GIY-YIG domain. 2 disordered regions span residues 300 to 334 (RRRR…DALQ) and 365 to 406 (AHRP…LGLQ).

Belongs to the SLX1 family. Forms a heterodimer with SLX4. A divalent metal cation is required as a cofactor.

The protein resides in the nucleus. Functionally, catalytic subunit of the SLX1-SLX4 structure-specific endonuclease that resolves DNA secondary structures generated during DNA repair and recombination. Has endonuclease activity towards branched DNA substrates, introducing single-strand cuts in duplex DNA close to junctions with ss-DNA. The chain is Structure-specific endonuclease subunit SLX1 from Paracoccidioides brasiliensis (strain Pb03).